A 129-amino-acid chain; its full sequence is Glycine cleavage system H protein (129 aa).

Residues 24–106 (TYTVGITEHA…YAGGWIFKIK (83 aa)) form the Lipoyl-binding domain. An N6-lipoyllysine modification is found at K65.

The protein belongs to the GcvH family. In terms of assembly, the glycine cleavage system is composed of four proteins: P, T, L and H. Requires (R)-lipoate as cofactor.

Functionally, the glycine cleavage system catalyzes the degradation of glycine. The H protein shuttles the methylamine group of glycine from the P protein to the T protein. The protein is Glycine cleavage system H protein of Escherichia fergusonii (strain ATCC 35469 / DSM 13698 / CCUG 18766 / IAM 14443 / JCM 21226 / LMG 7866 / NBRC 102419 / NCTC 12128 / CDC 0568-73).